Reading from the N-terminus, the 107-residue chain is Putative double-stranded DNA mimic protein YpsIP31758_1954 (107 aa).

The protein belongs to the putative dsDNA mimic protein family.

Its function is as follows. May act as a double-stranded DNA (dsDNA) mimic. Probably regulates the activity of a dsDNA-binding protein. The sequence is that of Putative double-stranded DNA mimic protein YpsIP31758_1954 from Yersinia pseudotuberculosis serotype O:1b (strain IP 31758).